The chain runs to 505 residues: RNA-splicing ligase RtcB homolog (505 aa).

5 residues coordinate Mn(2+): Asp119, Cys122, His227, His259, and His353. 226-230 (NHYAE) contacts GMP. GMP-binding positions include 353–354 (HN), 402–405 (GGTM), Ser409, 428–431 (HGAG), and Lys504. His428 functions as the GMP-histidine intermediate in the catalytic mechanism.

This sequence belongs to the RtcB family. In terms of assembly, catalytic component of the tRNA-splicing ligase complex. It depends on Mn(2+) as a cofactor.

The protein resides in the nucleus. It localises to the cytoplasm. The enzyme catalyses a 3'-end 3'-phospho-ribonucleotide-RNA + a 5'-end dephospho-ribonucleoside-RNA + GTP = a ribonucleotidyl-ribonucleotide-RNA + GMP + diphosphate. It carries out the reaction a 3'-end 2',3'-cyclophospho-ribonucleotide-RNA + a 5'-end dephospho-ribonucleoside-RNA + GTP + H2O = a ribonucleotidyl-ribonucleotide-RNA + GMP + diphosphate + H(+). Catalytic subunit of the tRNA-splicing ligase complex that acts by directly joining spliced tRNA halves to mature-sized tRNAs by incorporating the precursor-derived splice junction phosphate into the mature tRNA as a canonical 3',5'-phosphodiester. May act as an RNA ligase with broad substrate specificity, and may function toward other RNAs. In Xenopus tropicalis (Western clawed frog), this protein is RNA-splicing ligase RtcB homolog.